A 506-amino-acid polypeptide reads, in one-letter code: MDTILALTGITKRFPGVVALRGIDLRVARGEIHALLGENGAGKSTLMKILCGIYPPDEGTIAIDGEPRRFANHHDAIAAGVGIVFQEFSLIPDLNAVDNLFLGREWRGRLGLRDRARMRRAAADIFARLGMAVDLSAPVRELSVAQQQFVEIGKALSLDARVLILDEPTATLTPAEAARLFGVMRELKRQGVAMIFISHHLDEIFEVCDRITVLRDGQYVGTTQRARTDVGALVEMMVGRRIEHSFPPKPPLARDAAAVLEVDALQVRENGPVNRFALREGEILGFAGLVGSGRTSSALALIGAKPARVRRMRLRGRAVRLSGPADALAAGIGLLPESRKTQGLITEFSIRHNVAINNLGKHRRLRWFVDAAAEARATRELMKRLGVKAPTPDTRVDTLSGGNQQKVVIARWLNHHTRILIFDEPTRGIDIGAKAEIYQLMRELTARGYSIVLISSELPEIVGMCDRVAVFRQGRIEAVLDGDAIDANTVMTYATSDARGANHEHA.

ABC transporter domains follow at residues 5–241 (LALT…VGRR) and 254–498 (RDAA…TSDA). Residue 37-44 (GENGAGKS) participates in ATP binding.

This sequence belongs to the ABC transporter superfamily. Ribose importer (TC 3.A.1.2.1) family. In terms of assembly, the complex is composed of an ATP-binding protein (RbsA), two transmembrane proteins (RbsC) and a solute-binding protein (RbsB).

It localises to the cell inner membrane. The enzyme catalyses D-ribose(out) + ATP + H2O = D-ribose(in) + ADP + phosphate + H(+). Functionally, part of the ABC transporter complex RbsABC involved in ribose import. Responsible for energy coupling to the transport system. In Burkholderia thailandensis (strain ATCC 700388 / DSM 13276 / CCUG 48851 / CIP 106301 / E264), this protein is Ribose import ATP-binding protein RbsA 1.